The following is a 643-amino-acid chain: Phosphomethylpyrimidine synthase (643 aa).

Substrate-binding positions include Asn248, Met277, Tyr306, His342, 362–364 (SRG), 403–406 (DGLR), and Glu442. Residue His446 participates in Zn(2+) binding. Tyr469 contacts substrate. A Zn(2+)-binding site is contributed by His510. Positions 590, 593, and 598 each coordinate [4Fe-4S] cluster.

This sequence belongs to the ThiC family. As to quaternary structure, homodimer. Requires [4Fe-4S] cluster as cofactor.

The enzyme catalyses 5-amino-1-(5-phospho-beta-D-ribosyl)imidazole + S-adenosyl-L-methionine = 4-amino-2-methyl-5-(phosphooxymethyl)pyrimidine + CO + 5'-deoxyadenosine + formate + L-methionine + 3 H(+). Its pathway is cofactor biosynthesis; thiamine diphosphate biosynthesis. Its function is as follows. Catalyzes the synthesis of the hydroxymethylpyrimidine phosphate (HMP-P) moiety of thiamine from aminoimidazole ribotide (AIR) in a radical S-adenosyl-L-methionine (SAM)-dependent reaction. This is Phosphomethylpyrimidine synthase from Paraburkholderia xenovorans (strain LB400).